Reading from the N-terminus, the 51-residue chain is Large ribosomal subunit protein eL39z/eL39x (51 aa).

The segment at 1 to 21 (MPSHKSFMIKKKLGKKMRQNR) is disordered. Basic residues predominate over residues 7–19 (FMIKKKLGKKMRQ).

Belongs to the eukaryotic ribosomal protein eL39 family.

This chain is Large ribosomal subunit protein eL39z/eL39x (RPL39A), found in Arabidopsis thaliana (Mouse-ear cress).